Reading from the N-terminus, the 233-residue chain is Tumor necrosis factor (233 aa).

The Cytoplasmic portion of the chain corresponds to 1-35 (MSTESMIRDVELAEEALPKKTGGPQGSRRCLFLSL). Serine 2 is subject to Phosphoserine; by CK1. Residues lysine 19 and lysine 20 are each lipidated (N6-myristoyl lysine). The chain crosses the membrane as a helical; Signal-anchor for type II membrane protein span at residues 36 to 56 (FSFLLVAGATTLFCLLHFGVI). Topologically, residues 57–233 (GPQREEFPKD…GQVYFGIIAL (177 aa)) are extracellular. Serine 80 carries an O-linked (GalNAc...) serine; in soluble form glycan. In terms of domain architecture, THD spans 88 to 233 (PVAHVVANPQ…GQVYFGIIAL (146 aa)). Cysteines 145 and 177 form a disulfide.

The protein belongs to the tumor necrosis factor family. In terms of assembly, homotrimer. Interacts with SPPL2B. Post-translationally, the soluble form derives from the membrane form by proteolytic processing. The membrane-bound form is further proteolytically processed by SPPL2A or SPPL2B through regulated intramembrane proteolysis producing TNF intracellular domains (ICD1 and ICD2) released in the cytosol and TNF C-domain 1 and C-domain 2 secreted into the extracellular space. The membrane form, but not the soluble form, is phosphorylated on serine residues. Dephosphorylation of the membrane form occurs by binding to soluble TNFRSF1A/TNFR1. In terms of processing, O-glycosylated; glycans contain galactose, N-acetylgalactosamine and N-acetylneuraminic acid. Post-translationally, the soluble form is demyristoylated by SIRT6, promoting its secretion.

The protein localises to the cell membrane. Its subcellular location is the membrane. It localises to the secreted. Functionally, cytokine that binds to TNFRSF1A/TNFR1 and TNFRSF1B/TNFBR. It is mainly secreted by macrophages and can induce cell death of certain tumor cell lines. It is potent pyrogen causing fever by direct action or by stimulation of interleukin-1 secretion and is implicated in the induction of cachexia, Under certain conditions it can stimulate cell proliferation and induce cell differentiation. Induces insulin resistance in adipocytes via inhibition of insulin-induced IRS1 tyrosine phosphorylation and insulin-induced glucose uptake. Induces GKAP42 protein degradation in adipocytes which is partially responsible for TNF-induced insulin resistance. Plays a role in angiogenesis by inducing VEGF production synergistically with IL1B and IL6. Promotes osteoclastogenesis and therefore mediates bone resorption. In terms of biological role, the TNF intracellular domain (ICD) form induces IL12 production in dendritic cells. The protein is Tumor necrosis factor (TNF) of Papio sp. (Baboon).